The following is a 67-amino-acid chain: Protein AaeX (67 aa).

2 consecutive transmembrane segments (helical) span residues 3-23 (VLPV…ELII) and 43-63 (LVWH…YLVS).

The protein belongs to the AaeX family.

It is found in the cell membrane. This Pantoea vagans (strain C9-1) (Pantoea agglomerans (strain C9-1)) protein is Protein AaeX.